Consider the following 163-residue polypeptide: MAANTEQLTEEQIAEFKEAFALFDKDGDGTITTKELGTVMRSLGQNPTEAELQDMISEVDADGNGTIDFPEFLMLMARKMKETDHEDELREAFKVFDKDGNGFISAAELRHVMTNLGEKLSEEEVDEMIREADVDGDGQVNYEEFVRMMTSGATDDKDKKGHK.

The residue at position 2 (alanine 2) is an N-acetylalanine. EF-hand domains follow at residues glutamate 11 to asparagine 46, proline 47 to glutamate 82, aspartate 84 to lysine 119, and leucine 120 to aspartate 155. Residues aspartate 24, aspartate 26, aspartate 28, threonine 30, glutamate 35, aspartate 60, aspartate 62, asparagine 64, threonine 66, glutamate 71, aspartate 97, aspartate 99, asparagine 101, glutamate 108, aspartate 133, aspartate 135, aspartate 137, glutamine 139, and glutamate 144 each contribute to the Ca(2+) site.

It belongs to the calmodulin family. As to quaternary structure, associates with the spoke-associated complex containing CFAP61, CFAP91 and CFAP251; the association is calcium sensitive. Post-translationally, trimethylation of Lys-119 observed in other calmodulins is absent here.

The protein localises to the cytoplasm. It localises to the cytoskeleton. It is found in the flagellum axoneme. Its function is as follows. Calmodulin mediates the control of a large number of enzymes, ion channels and other proteins by Ca(2+). Among the enzymes to be stimulated by the calmodulin-Ca(2+) complex are a number of protein kinases and phosphatases. This Chlamydomonas reinhardtii (Chlamydomonas smithii) protein is Calmodulin.